The sequence spans 155 residues: Chaperone protein IpgC (155 aa).

This sequence belongs to the LcrH/SycD chaperone family.

It is found in the cytoplasm. Functionally, assists the correct folding of nascent IpaB. Once it is bound to IpaB, it binds to IpaC and impedes their premature association that would lead to their degradation in the absence of IpcG. The protein is Chaperone protein IpgC (ipgC) of Shigella dysenteriae.